The following is a 381-amino-acid chain: Homoserine O-succinyltransferase (381 aa).

Residues 45-360 form the AB hydrolase-1 domain; sequence NAVLVCHALN…PHGHDAFLLD (316 aa). Serine 151 functions as the Nucleophile in the catalytic mechanism. Arginine 221 serves as a coordination point for substrate. Catalysis depends on residues aspartate 321 and histidine 354. Position 355 (aspartate 355) interacts with substrate.

It belongs to the AB hydrolase superfamily. MetX family. Homodimer.

Its subcellular location is the cytoplasm. It carries out the reaction L-homoserine + succinyl-CoA = O-succinyl-L-homoserine + CoA. It functions in the pathway amino-acid biosynthesis; L-methionine biosynthesis via de novo pathway; O-succinyl-L-homoserine from L-homoserine: step 1/1. Its function is as follows. Transfers a succinyl group from succinyl-CoA to L-homoserine, forming succinyl-L-homoserine. The protein is Homoserine O-succinyltransferase of Burkholderia lata (strain ATCC 17760 / DSM 23089 / LMG 22485 / NCIMB 9086 / R18194 / 383).